A 2335-amino-acid polypeptide reads, in one-letter code: Histone-lysine N-methyltransferase ATXR3 (2335 aa).

Disordered stretches follow at residues 30 to 142, 332 to 355, 371 to 556, and 902 to 961; these read NESK…FKDE, STGN…SYAD, CSRS…SSSK, and DQVP…KTDT. 2 stretches are compositionally biased toward polar residues: residues 31 to 46 and 53 to 62; these read ESKT…TSIA and QPANKPSASS. A compositionally biased stretch (basic residues) spans 65–84; the sequence is VKKKRIVKVIRKVVKRRPKQ. Residues 67–74 carry the Nuclear localization signal 1 motif; that stretch reads KKRIVKVI. A compositionally biased stretch (polar residues) spans 97-112; sequence PPSQVVQLPAESQLQI. 3 stretches are compositionally biased toward basic and acidic residues: residues 340–353, 371–390, and 430–452; these read HGAE…KHSY, CSRS…RLYR, and WSPH…RERS. The segment covering 461–475 has biased composition (basic residues); it reads HARKRSPRDRRHHDY. Composition is skewed to basic and acidic residues over residues 485-498, 507-548, and 910-921; these read SPHD…RRDY, QSDR…ESNG, and PRAKVRSKERCP. A Nuclear localization signal 2 motif is present at residues 527–534; it reads ERRDCQTG. Residues 922–932 show a composition bias toward low complexity; that stretch reads SRPARPSPASS. Residues 941–961 are compositionally biased toward polar residues; the sequence is SHSQSTASTGQDSQGLWKTDT. Residues 1382–1389 carry the Nuclear localization signal 3 motif; it reads ARRSSAIL. The segment at 1532–1572 is disordered; it reads NRKSFSSESDTSSELSDNGKSDNYSSASASESESDIRSEGR. The segment covering 1535-1547 has biased composition (low complexity); sequence SFSSESDTSSELS. An SET domain is found at 1765-1904; sequence KEIESRSDDK…YGEEITFDYN (140 aa). Residue cysteine 1868 coordinates Zn(2+). Tyrosine 1903 contacts S-adenosyl-L-methionine. One can recognise a Post-SET domain in the interval 1914–1930; it reads EASVCLCGSQVCRGSYL. Residues cysteine 1918, cysteine 1920, and cysteine 1925 each contribute to the Zn(2+) site.

Belongs to the class V-like SAM-binding methyltransferase superfamily. Histone-lysine methyltransferase family. TRX/MLL subfamily. In terms of tissue distribution, expressed in roots, leaves, stems and inflorescences.

The protein resides in the nucleus. It carries out the reaction L-lysyl(4)-[histone H3] + 3 S-adenosyl-L-methionine = N(6),N(6),N(6)-trimethyl-L-lysyl(4)-[histone H3] + 3 S-adenosyl-L-homocysteine + 3 H(+). Its function is as follows. Histone methyltransferase specifically required for trimethylation of 'Lys-4' of histone H3 (H3K4me3) and is crucial for both sporophyte and gametophyte development. Function as a diurnal 'writer' to counteract the nocturne 'eraser' demethylase activity of JMJ14 thus orchestrating the circadian rhythm of histone modifications (e.g. H3K4me3) and modulating the rhythmic expression of diurnal target genes; this mechanism relies also on the circadian clock oscillators CCA1 and LHY. This Arabidopsis thaliana (Mouse-ear cress) protein is Histone-lysine N-methyltransferase ATXR3.